The chain runs to 462 residues: GTPase Der (462 aa).

2 EngA-type G domains span residues 2 to 164 and 195 to 366; these read KKIA…PKKE and INVA…KNYS. GTP-binding positions include 8–15, 55–59, 116–119, 201–208, 248–252, and 312–315; these read GKPNVGKS, DTGGI, NKID, GRVNVGKS, DTAGI, and NKWD. The region spanning 367 to 451 is the KH-like domain; sequence TWLPTGQLNR…PIILRPRKRG (85 aa).

This sequence belongs to the TRAFAC class TrmE-Era-EngA-EngB-Septin-like GTPase superfamily. EngA (Der) GTPase family. In terms of assembly, associates with the 50S ribosomal subunit.

Functionally, GTPase that plays an essential role in the late steps of ribosome biogenesis. The polypeptide is GTPase Der (Nitratiruptor sp. (strain SB155-2)).